Reading from the N-terminus, the 344-residue chain is 3,4-dihydroxy-2-butanone 4-phosphate synthase (344 aa).

Residues 1–202 (MILKRVTEAL…VSDLISYRLE (202 aa)) are DHBP synthase. D-ribulose 5-phosphate contacts are provided by residues 27–28 (RE), aspartate 32, 139–143 (RTGHT), and glutamate 163. Glutamate 28 contacts Mg(2+). Residue histidine 142 participates in Mg(2+) binding. Residues 203-344 (NESLLKMFCQ…GLKLVETISL (142 aa)) form a GTP cyclohydrolase II-like region.

This sequence in the N-terminal section; belongs to the DHBP synthase family. It in the C-terminal section; belongs to the GTP cyclohydrolase II family. The cofactor is Mg(2+). It depends on Mn(2+) as a cofactor.

The catalysed reaction is D-ribulose 5-phosphate = (2S)-2-hydroxy-3-oxobutyl phosphate + formate + H(+). Its pathway is cofactor biosynthesis; riboflavin biosynthesis; 2-hydroxy-3-oxobutyl phosphate from D-ribulose 5-phosphate: step 1/1. Catalyzes the conversion of D-ribulose 5-phosphate to formate and 3,4-dihydroxy-2-butanone 4-phosphate. The protein is 3,4-dihydroxy-2-butanone 4-phosphate synthase (ribB) of Helicobacter pylori (strain ATCC 700392 / 26695) (Campylobacter pylori).